A 336-amino-acid chain; its full sequence is F420-dependent glucose-6-phosphate dehydrogenase (336 aa).

Aspartate 39 lines the coenzyme F420-(gamma-Glu)n pocket. The Proton donor role is filled by histidine 40. Coenzyme F420-(gamma-Glu)n contacts are provided by residues threonine 76 and 107 to 108 (TG). The active-site Proton acceptor is glutamate 109. Residues asparagine 112, 177-178 (GG), and 180-181 (EV) contribute to the coenzyme F420-(gamma-Glu)n site. Substrate contacts are provided by threonine 195, lysine 198, lysine 259, and arginine 283.

The protein belongs to the F420-dependent glucose-6-phosphate dehydrogenase family. Homodimer.

It carries out the reaction oxidized coenzyme F420-(gamma-L-Glu)(n) + D-glucose 6-phosphate + H(+) = 6-phospho-D-glucono-1,5-lactone + reduced coenzyme F420-(gamma-L-Glu)(n). Its function is as follows. Catalyzes the coenzyme F420-dependent oxidation of glucose 6-phosphate (G6P) to 6-phosphogluconolactone. Appears to have a role in resistance to oxidative stress, via its consumption of G6P that serves as a source of reducing power to combat oxidative stress in mycobacteria. In Mycobacterium leprae (strain Br4923), this protein is F420-dependent glucose-6-phosphate dehydrogenase.